Consider the following 75-residue polypeptide: Putative membrane protein insertion efficiency factor (75 aa).

Belongs to the UPF0161 family.

Its subcellular location is the cell membrane. Functionally, could be involved in insertion of integral membrane proteins into the membrane. The sequence is that of Putative membrane protein insertion efficiency factor from Bacillus cytotoxicus (strain DSM 22905 / CIP 110041 / 391-98 / NVH 391-98).